We begin with the raw amino-acid sequence, 314 residues long: MSRPRRRGRDVHGVLLLDKPQGVSSNDVLQKVKRIFNANRAGHTGALDPLATGMLPICLGEATKFSQYLLDSDKRYRVIARLGQRTDTSDADGNVIEERAIGFSATDLELALESFRGTTQQVPSMYSALKYQGRKLYEYARQGLTVPREAREITVYELQFIRWEGDELELEIHCSKGTYIRTIIDDLGEQLGCGAHVIYLRRLQVAIYPTERMVTLEQLAALAEQAQTQEHSLSLSLDSLLMPMESPVIDFPEVNLPPVVAGYLKLGQAVQAANAPLNGMVRITEGDAHKFIGMGEIDGDGRVAPRRLVVEFPV.

His43 contributes to the substrate binding site. Residue Asp48 is the Nucleophile of the active site. The substrate site is built by Tyr76, Tyr179, and Leu200.

This sequence belongs to the pseudouridine synthase TruB family. Type 1 subfamily.

The catalysed reaction is uridine(55) in tRNA = pseudouridine(55) in tRNA. Responsible for synthesis of pseudouridine from uracil-55 in the psi GC loop of transfer RNAs. This is tRNA pseudouridine synthase B from Pectobacterium atrosepticum (strain SCRI 1043 / ATCC BAA-672) (Erwinia carotovora subsp. atroseptica).